The primary structure comprises 138 residues: Basic phospholipase A2 ammodytoxin B (138 aa).

An N-terminal signal peptide occupies residues Met-1–Gly-16. Disulfide bonds link Cys-42–Cys-131, Cys-44–Cys-60, Cys-59–Cys-111, Cys-65–Cys-138, Cys-66–Cys-104, Cys-73–Cys-97, and Cys-91–Cys-102. Residues Tyr-43, Gly-45, and Gly-47 each coordinate Ca(2+). Residue His-63 is part of the active site. Asp-64 is a binding site for Ca(2+). Residue Asp-105 is part of the active site.

This sequence belongs to the phospholipase A2 family. Group II subfamily. D49 sub-subfamily. In terms of assembly, monomer. Binds to calmodulin, coagulation factor X (F10), M-type PLA2 receptor (R-180), 14-3-3 proteins gamma (YWHAG) and epsilon (YWHAE), and R25, a mitochondrial membrane protein. Requires Ca(2+) as cofactor. Expressed by the venom gland.

It localises to the secreted. It is found in the host cytoplasm. Its subcellular location is the host cytosol. The enzyme catalyses a 1,2-diacyl-sn-glycero-3-phosphocholine + H2O = a 1-acyl-sn-glycero-3-phosphocholine + a fatty acid + H(+). Its function is as follows. Snake venom phospholipase A2 (PLA2) that acts as a presynaptic neurotoxin, an inhibitor of blood coagulation, and has been found to bind with high affinity to intracellular proteins. The response of indirectly stimulated neuromuscular preparations to ammodytoxin (Atx) is triphasic. The first phase, the transient inhibition of the acetylcholine (ACh) release, starts soon after the addition of Atx and lasts for several minutes. This phase is probably independent of Atx enzymatic activity. The effect may be due to the specific binding of the toxin to presynaptic receptors. These receptors, called N-type receptors, are still unidentified. It is noteworthy that a neuronal isoform of the M-type PLA2 receptor (R180) has been identified as a high-affinity receptor for Atx in neuronal plasma membranes. It was demonstrated however that this receptor is not essential for expression of neurotoxicity by Atx. The second phase corresponds to an augmentation of neurotransmitter release. A peak is reached 10-20 minutes after exposure of the preparation to Atx and is followed by a gradual reduction. In this phase, the enzymatic activity of Atx of the mammalian is not significant. It is speculated that the increased release of neurotransmitter in this phase is induced by the interference of Atx with voltage-gated potassium channels. Measurements of ionic currents showed however that voltage-gated potassium channels are not affected by Atx. The third phase of the response of neuromuscular preparations to Atx, which corresponds to a complete and irreversible paralysis, is clearly dependent on the hydrolytic activity of the toxin. In addition to its presynaptic neurotoxicity, Atx shows an anticoagulant activity by binding with high affinity to activated coagulation factor X (F10) thus inhibiting the formation of the prothrombinase complex (FX/FV) and its activity (IC(50) is 82 nM). Surprisingly, Atx was discovered to bind intracellular proteins such as calmodulin (CaM), 14-3-3 proteins gamma (YWHAG) and epsilon (YWHAE) (by similarity with AtxC), as well as R25 (by similarity with AtxC), a mitochondrial integral membrane protein found in cerebral cortex. These findings raised a doubt about the dogma of the exclusively extracellular action of PLA2s, defended by the potential instability of these molecules in the reducing environment of the eukaryotic cytosol coupled with their possible inability to act as enzymes in this cellular compartment, due to too low concentration of calcium ions. This hypothesis was challenged efficiently by demonstrating the internalization of AtxA into a culture cells, but still remains to be directly demonstrated in vivo. PLA2 catalyzes the calcium-dependent hydrolysis of the 2-acyl groups in 3-sn-phosphoglycerides. The protein is Basic phospholipase A2 ammodytoxin B of Vipera ammodytes ammodytes (Western sand viper).